We begin with the raw amino-acid sequence, 278 residues long: MVRKLNKTYAPSTRNGTIKGQVKSARGKNLIYGKHRCGKGRNARGIITARHRGGGHKRLYRKIDFRRNKKNIYGRIITIEYDPNRNAHICLIHYRNGEKGYILHPRGTIIGDTIVSGTEVSIKIGNALPLTEMPLGTAIHNLEITRGKGGQLARAAGAVAKLIAKEGKSATLKLPSGEVRLISKNCSATVGQVGNVGVNQKSLGRAGAQRWLGKRPVVRGVVMNPVDHPHGGGEGRAPIGRKKPTTPWGYPALGRKTRKGNKYSDKFILRHRRKQQRI.

Positions 224–256 (NPVDHPHGGGEGRAPIGRKKPTTPWGYPALGRK) are disordered.

It belongs to the universal ribosomal protein uL2 family. Part of the 50S ribosomal subunit.

It is found in the plastid. The chain is Large ribosomal subunit protein uL2c (rpl2) from Cuscuta exaltata (Tall dodder).